The following is a 96-amino-acid chain: Cytoplasmic envelopment protein 3 (96 aa).

Gly-2 carries the N-myristoyl glycine; by host lipid modification. Positions 18 to 19 (LI) match the Di-leucine-like internalization motif motif. The tract at residues 37–43 (DIESEEE) is asp/Glu-rich (acidic). Ser-40 is subject to Phosphoserine. Residues 57 to 96 (RAPGRQRLRSSDPPSRHTHRRTPGGACPATQFPPPMSDSE) are disordered. Residues 87–96 (QFPPPMSDSE) show a composition bias toward pro residues.

The protein belongs to the herpesviridae cytoplasmic envelopment protein 3 family. In terms of assembly, interacts with cytoplasmic envelopment protein 2; this interaction is essential for the proper localization of each protein to the assembly complex and thus for the production of infectious virus. Interacts with gE (via C-terminus). Interacts with gD (via C-terminus). Interacts with UL56. In terms of processing, myristoylation and palmitoylation (probably on one or more of the nearby cysteines at the N-terminus) enable membrane-binding and Golgi apparatus-specific targeting and are essential for efficient packaging. Post-translationally, phosphorylated. Phosphorylation does not seem to be required for recycling to the host Golgi apparatus. Packaging is selective for underphosphorylated forms.

The protein localises to the virion tegument. It is found in the virion membrane. Its subcellular location is the host cell membrane. The protein resides in the host Golgi apparatus membrane. In terms of biological role, plays an important role in the cytoplasmic envelopment of tegument proteins and capsids during the assembly and egress processes. Also participates in viral entry at the fusion step probably by regulating the core fusion machinery. This chain is Cytoplasmic envelopment protein 3, found in Human herpesvirus 1 (strain KOS) (HHV-1).